Here is a 302-residue protein sequence, read N- to C-terminus: Pseudouridine-5'-phosphate glycosidase (302 aa).

Glu25 functions as the Proton donor in the catalytic mechanism. Substrate contacts are provided by Lys86 and Val106. Asp138 is a binding site for Mn(2+). 140-142 is a binding site for substrate; the sequence is SAD. Catalysis depends on Lys159, which acts as the Nucleophile.

The protein belongs to the pseudouridine-5'-phosphate glycosidase family. As to quaternary structure, homotrimer. Mn(2+) is required as a cofactor.

It catalyses the reaction D-ribose 5-phosphate + uracil = psi-UMP + H2O. Catalyzes the reversible cleavage of pseudouridine 5'-phosphate (PsiMP) to ribose 5-phosphate and uracil. Functions biologically in the cleavage direction, as part of a pseudouridine degradation pathway. This Glaesserella parasuis serovar 5 (strain SH0165) (Haemophilus parasuis) protein is Pseudouridine-5'-phosphate glycosidase.